Consider the following 307-residue polypeptide: MLRVVEGIFIFVVISEXVFGVLGNGFIGLVNCIDCAKNKLSTIGFILTGLAISRIFLIWIIITDGFIQIFSPDIYASGNLIEYISYFWVIGNQSSMWFATSLSIFYFLKIANFSNYIFLWLKSRTNMVLPFMIVFLLISSLLNFAHIAKILNDYKMKNDTVWDLNMYKSEYFIKQILLNLGVIFFFTLSLITCVFLIISLWRHNRQMQSNVTGLRDSNTEAHVKAMKVLISFXILFILYFIGMAIEISCFTVRENKLLLMFGMTTTAIYPWGHSFILILGNSKLKQASLRVLQQLKCCEKRKNLRVT.

Residues 1–6 lie on the Extracellular side of the membrane; sequence MLRVVE. A helical transmembrane segment spans residues 7 to 27; that stretch reads GIFIFVVISEXVFGVLGNGFI. Residues 28 to 42 lie on the Cytoplasmic side of the membrane; the sequence is GLVNCIDCAKNKLST. The chain crosses the membrane as a helical span at residues 43–63; sequence IGFILTGLAISRIFLIWIIIT. Topologically, residues 64–100 are extracellular; that stretch reads DGFIQIFSPDIYASGNLIEYISYFWVIGNQSSMWFAT. Asparagine 92 carries an N-linked (GlcNAc...) asparagine glycan. Residues 101–121 traverse the membrane as a helical segment; that stretch reads SLSIFYFLKIANFSNYIFLWL. Residues 122–126 are Cytoplasmic-facing; sequence KSRTN. A helical membrane pass occupies residues 127–147; it reads MVLPFMIVFLLISSLLNFAHI. Residues 148–179 are Extracellular-facing; it reads AKILNDYKMKNDTVWDLNMYKSEYFIKQILLN. N-linked (GlcNAc...) asparagine glycosylation occurs at asparagine 158. The chain crosses the membrane as a helical span at residues 180-200; the sequence is LGVIFFFTLSLITCVFLIISL. Topologically, residues 201 to 227 are cytoplasmic; that stretch reads WRHNRQMQSNVTGLRDSNTEAHVKAMK. Residues 228-248 traverse the membrane as a helical segment; that stretch reads VLISFXILFILYFIGMAIEIS. Residues 249–257 are Extracellular-facing; it reads CFTVRENKL. A helical membrane pass occupies residues 258-278; that stretch reads LLMFGMTTTAIYPWGHSFILI. The Cytoplasmic segment spans residues 279–307; that stretch reads LGNSKLKQASLRVLQQLKCCEKRKNLRVT.

This sequence belongs to the G-protein coupled receptor T2R family.

It is found in the membrane. Receptor that may play a role in the perception of bitterness and is gustducin-linked. May play a role in sensing the chemical composition of the gastrointestinal content. The activity of this receptor may stimulate alpha gustducin, mediate PLC-beta-2 activation and lead to the gating of TRPM5. This chain is Taste receptor type 2 member 10 (TAS2R10), found in Gorilla gorilla gorilla (Western lowland gorilla).